Consider the following 131-residue polypeptide: Neo-calmodulin (131 aa).

EF-hand domains follow at residues 1–32 (EFKEAFSLFDKDGDGTITTKELGTVMRSLGQN), 33–68 (PTEAELQDMINEVDADGNGTIDFPEFLTMMARKMKD), 70–105 (DSEEEIREAFRVFDKDSNGYISAAELRHVMTNLGEK), and 106–131 (LTDEEVDEMIREADIDGDGQVNYEEF). 20 residues coordinate Ca(2+): D10, D12, D14, T16, E21, D46, D48, N50, T52, E57, D83, D85, N87, Y89, E94, D119, D121, D123, Q125, and E130.

Belongs to the calmodulin family.

The protein is Neo-calmodulin of Gallus gallus (Chicken).